The sequence spans 249 residues: Probable phosphatase Spea_1436 (249 aa).

H8, H10, H16, H41, E74, H102, H132, D193, and H195 together coordinate Zn(2+).

This sequence belongs to the PHP family. Requires Zn(2+) as cofactor.

The sequence is that of Probable phosphatase Spea_1436 from Shewanella pealeana (strain ATCC 700345 / ANG-SQ1).